Here is a 383-residue protein sequence, read N- to C-terminus: Soluble hydrogenase 42 kDa subunit (383 aa).

K194 carries the post-translational modification N6-(pyridoxal phosphate)lysine.

This sequence belongs to the class-V pyridoxal-phosphate-dependent aminotransferase family. In terms of assembly, heterodimer of a large and a small subunit. Requires pyridoxal 5'-phosphate as cofactor.

Its subcellular location is the cytoplasm. Soluble hydrogenase catalyzes both production and consumption of hydrogen from suitable artificial electron donors or acceptors. This subunit catalyzes the tritium-exchange activity. This Anabaena cylindrica protein is Soluble hydrogenase 42 kDa subunit.